A 442-amino-acid chain; its full sequence is Prenyltransferase nscD (442 aa).

Belongs to the tryptophan dimethylallyltransferase family.

Its pathway is secondary metabolite biosynthesis. Its function is as follows. Prenyltransferase; part of the gene cluster that mediates the biosynthesis of neosartoricin B, a prenylated anthracenone that probably exhibits T-cell antiproliferative activity, suggestive of a physiological role as an immunosuppressive agent. The non-reducing polyketide synthase nscA probably synthesizes and cyclizes the decaketide backbone. The hydrolase nscB then mediates the product release through hydrolysis followed by spontaneous decarboxylation. The prenyltransferase nscD catalyzes the addition of the dimethylallyl group to the aromatic C5. The FAD-dependent monooxygenase nscC is then responsible for the stereospecific hydroxylation at C2. Neosartoricin B can be converted into two additional compounds neosartoricins C and D. Neosartoricin C is a spirocyclic compound that is cyclized through the attack of C3 hydroxyl on C14, followed by dehydration. On the other hand, neosartoricin D is a further cyclized compound in which attack of C2 on C14 in neosartoricin C results in the formation of the acetal-containing dioxabicyclo-octanone ring. Both of these compounds are novel and possibly represent related metabolites of the gene cluster. The polypeptide is Prenyltransferase nscD (Trichophyton verrucosum (strain HKI 0517)).